The primary structure comprises 66 residues: Large ribosomal subunit protein bL35 (66 aa).

Belongs to the bacterial ribosomal protein bL35 family.

This chain is Large ribosomal subunit protein bL35, found in Brucella melitensis biotype 1 (strain ATCC 23456 / CCUG 17765 / NCTC 10094 / 16M).